The primary structure comprises 102 residues: Small ribosomal subunit protein uS10 (102 aa).

Belongs to the universal ribosomal protein uS10 family. Part of the 30S ribosomal subunit.

In terms of biological role, involved in the binding of tRNA to the ribosomes. The polypeptide is Small ribosomal subunit protein uS10 (Ligilactobacillus salivarius (strain UCC118) (Lactobacillus salivarius)).